A 288-amino-acid chain; its full sequence is Probable ketoamine kinase PM0587 (288 aa).

ATP is bound at residue Glu92 to Leu94.

This sequence belongs to the fructosamine kinase family.

Functionally, ketoamine kinase that phosphorylates ketoamines on the third carbon of the sugar moiety to generate ketoamine 3-phosphate. This is Probable ketoamine kinase PM0587 from Pasteurella multocida (strain Pm70).